A 141-amino-acid polypeptide reads, in one-letter code: Large ribosomal subunit protein uL11 (141 aa).

This sequence belongs to the universal ribosomal protein uL11 family. Part of the ribosomal stalk of the 50S ribosomal subunit. Interacts with L10 and the large rRNA to form the base of the stalk. L10 forms an elongated spine to which L12 dimers bind in a sequential fashion forming a multimeric L10(L12)X complex. In terms of processing, one or more lysine residues are methylated.

In terms of biological role, forms part of the ribosomal stalk which helps the ribosome interact with GTP-bound translation factors. In Clostridium acetobutylicum (strain ATCC 824 / DSM 792 / JCM 1419 / IAM 19013 / LMG 5710 / NBRC 13948 / NRRL B-527 / VKM B-1787 / 2291 / W), this protein is Large ribosomal subunit protein uL11.